A 324-amino-acid chain; its full sequence is Cytochrome c biogenesis protein CcsA (324 aa).

8 helical membrane passes run 17–37, 44–64, 68–88, 99–119, 145–165, 230–250, 264–278, and 291–311; these read IISV…IPAL, GMIA…IYSG, LSNL…IHMI, YLSA…TSGL, MLLS…LLVI, VISI…VWAN, TWAF…IYSH, and AIVA…VNLL.

Belongs to the CcmF/CycK/Ccl1/NrfE/CcsA family. As to quaternary structure, may interact with Ccs1.

It is found in the plastid. The protein resides in the chloroplast thylakoid membrane. In terms of biological role, required during biogenesis of c-type cytochromes (cytochrome c6 and cytochrome f) at the step of heme attachment. The protein is Cytochrome c biogenesis protein CcsA of Lemna minor (Common duckweed).